Reading from the N-terminus, the 264-residue chain is Proteasome subunit beta type-4 (264 aa).

Methionine 1 carries the N-acetylmethionine modification. Residues 1 to 45 (MEALLESRSGLWAGGPAPGQFYRIPPTPGSSVDPVSALYGSPITR) constitute a propeptide that is removed on maturation. Tyrosine 102 is modified (phosphotyrosine).

This sequence belongs to the peptidase T1B family. In terms of assembly, the 26S proteasome consists of a 20S proteasome core and two 19S regulatory subunits. The 20S proteasome core is a barrel-shaped complex made of 28 subunits that are arranged in four stacked rings. The two outer rings are each formed by seven alpha subunits, and the two inner rings are formed by seven beta subunits. The proteolytic activity is exerted by three beta-subunits PSMB5, PSMB6 and PSMB7. Forms a ternary complex with SMAD1 and OAZ1 before PSMB4 is incorporated into the 20S proteasome. Interacts with PRPF19.

It is found in the cytoplasm. It localises to the nucleus. Non-catalytic component of the 20S core proteasome complex involved in the proteolytic degradation of most intracellular proteins. This complex plays numerous essential roles within the cell by associating with different regulatory particles. Associated with two 19S regulatory particles, forms the 26S proteasome and thus participates in the ATP-dependent degradation of ubiquitinated proteins. The 26S proteasome plays a key role in the maintenance of protein homeostasis by removing misfolded or damaged proteins that could impair cellular functions, and by removing proteins whose functions are no longer required. Associated with the PA200 or PA28, the 20S proteasome mediates ubiquitin-independent protein degradation. This type of proteolysis is required in several pathways including spermatogenesis (20S-PA200 complex) or generation of a subset of MHC class I-presented antigenic peptides (20S-PA28 complex). SMAD1/OAZ1/PSMB4 complex mediates the degradation of the CREBBP/EP300 repressor SNIP1. The protein is Proteasome subunit beta type-4 (PSMB4) of Bos taurus (Bovine).